A 261-amino-acid chain; its full sequence is Indole-3-glycerol phosphate synthase (261 aa).

This sequence belongs to the TrpC family.

The enzyme catalyses 1-(2-carboxyphenylamino)-1-deoxy-D-ribulose 5-phosphate + H(+) = (1S,2R)-1-C-(indol-3-yl)glycerol 3-phosphate + CO2 + H2O. Its pathway is amino-acid biosynthesis; L-tryptophan biosynthesis; L-tryptophan from chorismate: step 4/5. The polypeptide is Indole-3-glycerol phosphate synthase (Burkholderia vietnamiensis (strain G4 / LMG 22486) (Burkholderia cepacia (strain R1808))).